The primary structure comprises 472 residues: Sodium-coupled neutral amino acid transporter 5 (472 aa).

The residue at position 1 (Met1) is an N-acetylmethionine. At 1–48 (MELQDPKMNGALPSDAVGYRQEREGFLPSRGPAPGSKPVQFMDFEGKT) the chain is on the cytoplasmic side. Residues 49 to 71 (SFGMSVFNLSNAIMGSGILGLAY) form a helical membrane-spanning segment. The Extracellular segment spans residues 72-87 (AMAHTGVIFFLALLLC). Residues 88-108 (IALLSSYSIHLLLTCAGIAGI) traverse the membrane as a helical segment. Residues 109–125 (RAYEQLGQRAFGPAGKV) are Cytoplasmic-facing. A helical transmembrane segment spans residues 126–146 (VVATVICLHNVGAMSSYLFII). Topologically, residues 147–166 (KSELPLVIGTFLYMDPEGDW) are extracellular. A helical transmembrane segment spans residues 167–187 (FLKGNLLIIIVSVLIILPLAL). The Cytoplasmic portion of the chain corresponds to 188–192 (MKHLG). Residues 193-213 (YLGYTSGLSLTCMLFFLVSVI) form a helical membrane-spanning segment. At 214 to 257 (YKKFQLGCAIGHNETAMESEALVGLPSQGLNSSCEAQMFTVDSQ) the chain is on the extracellular side. Cys221 and Cys247 are oxidised to a cystine. The N-linked (GlcNAc...) asparagine glycan is linked to Asn226. A helical transmembrane segment spans residues 258-278 (MSYTVPIMAFAFVCHPEVLPI). The Cytoplasmic segment spans residues 279-295 (YTELCRPSKRRMQAVAN). The helical transmembrane segment at 296–316 (VSIGAMFCMYGLTATFGYLTF) threads the bilayer. Over 317–334 (YSSVKAEMLHMYSQKDPL) the chain is Extracellular. Residues 335 to 355 (ILCVRLAVLLAVTLTVPVVLF) traverse the membrane as a helical segment. At 356–376 (PIRRALQQLLFPGKAFSWPRH) the chain is on the cytoplasmic side. A helical transmembrane segment spans residues 377–397 (VAIALILLVLVNVLVICVPTI). Residues 398 to 399 (RD) are Extracellular-facing. Residues 400–420 (IFGVIGSTSAPSLIFILPSIF) traverse the membrane as a helical segment. The Cytoplasmic portion of the chain corresponds to 421 to 439 (YLRIVPSEVEPFLSWPKIQ). Residues 440-460 (ALCFGVLGVLFMAVSLGFMFA) traverse the membrane as a helical segment. At 461 to 472 (NWATGQSRMSGH) the chain is on the extracellular side.

This sequence belongs to the amino acid/polyamine transporter 2 family. Predominantly expressed in stomach, brain, liver, lung and intestinal tract.

The protein localises to the cell membrane. It carries out the reaction L-serine(out) + Na(+)(out) + H(+)(in) = L-serine(in) + Na(+)(in) + H(+)(out). The catalysed reaction is L-alanine(out) + Na(+)(out) + H(+)(in) = L-alanine(in) + Na(+)(in) + H(+)(out). It catalyses the reaction glycine(out) + Na(+)(out) + H(+)(in) = glycine(in) + Na(+)(in) + H(+)(out). The enzyme catalyses L-glutamine(out) + Na(+)(out) + H(+)(in) = L-glutamine(in) + Na(+)(in) + H(+)(out). It carries out the reaction L-asparagine(out) + Na(+)(out) + H(+)(in) = L-asparagine(in) + Na(+)(in) + H(+)(out). The catalysed reaction is L-histidine(out) + Na(+)(out) + H(+)(in) = L-histidine(in) + Na(+)(in) + H(+)(out). It catalyses the reaction L-cysteine(out) + Na(+)(out) + H(+)(in) = L-cysteine(in) + Na(+)(in) + H(+)(out). Its activity is regulated as follows. Not inhibited by lithium. Partial allosteric regulation on ions sodium binding. Functionally, symporter that cotransports neutral amino acids and sodium ions, coupled to an H(+) antiporter activity. Releases L-glutamine and glycine from astroglial cells and may participate in the glutamate/GABA-L-glutamine cycle and the NMDA receptors activation. In addition, contributes significantly to L-glutamine uptake in retina, namely in ganglion and Mueller cells therefore, participates in the retinal glutamate-glutamine cycle. The transport activity is pH sensitive and Li(+) tolerant. Moreover functions in both direction and is associated with large uncoupled fluxes of protons. The transport is electroneutral coupled to the cotransport of 1 Na(+) and the antiport of 1 H(+). May have a particular importance for modulation of net hepatic glutamine flux. The polypeptide is Sodium-coupled neutral amino acid transporter 5 (SLC38A5) (Homo sapiens (Human)).